The primary structure comprises 130 residues: Small ribosomal subunit protein uS11c (130 aa).

Belongs to the universal ribosomal protein uS11 family. As to quaternary structure, part of the 30S ribosomal subunit.

It localises to the plastid. The protein localises to the cyanelle. The sequence is that of Small ribosomal subunit protein uS11c from Cyanophora paradoxa.